The following is an 86-amino-acid chain: Large ribosomal subunit protein uL23 (86 aa).

It belongs to the universal ribosomal protein uL23 family. As to quaternary structure, part of the 50S ribosomal subunit. Contacts protein L29.

Its function is as follows. Binds to 23S rRNA. One of the proteins that surrounds the polypeptide exit tunnel on the outside of the ribosome. The polypeptide is Large ribosomal subunit protein uL23 (Methanosphaera stadtmanae (strain ATCC 43021 / DSM 3091 / JCM 11832 / MCB-3)).